We begin with the raw amino-acid sequence, 209 residues long: Large ribosomal subunit protein uL3 (209 aa).

Q150 carries the post-translational modification N5-methylglutamine.

This sequence belongs to the universal ribosomal protein uL3 family. In terms of assembly, part of the 50S ribosomal subunit. Forms a cluster with proteins L14 and L19. Methylated by PrmB.

Functionally, one of the primary rRNA binding proteins, it binds directly near the 3'-end of the 23S rRNA, where it nucleates assembly of the 50S subunit. The protein is Large ribosomal subunit protein uL3 of Salmonella arizonae (strain ATCC BAA-731 / CDC346-86 / RSK2980).